The sequence spans 368 residues: Probable endopolygalacturonase I (368 aa).

An N-terminal signal peptide occupies residues 1-18; that stretch reads MRSVEILGLAALGSLVAA. Positions 19–31 are excised as a propeptide; it reads APSPSRVSNSAKK. Cysteines 35 and 50 form a disulfide. 2 PbH1 repeats span residues 162-192 and 193-214; these read ATNLQLTDITIDNSDGDENGGHNTDAFDIGE and SNGVYIRGAVVKNQDDCIAINS. Asp-207 acts as the Proton donor in catalysis. Cys-209 and Cys-225 form a disulfide bridge. Residue His-229 is part of the active site. PbH1 repeat units lie at residues 244–265, 273–295, and 307–328; these read VKNVTITDSTISDSDNGVRIKT, VGDVTYSNIKLSNIAKYGIVIEQ, and TTGVPITGLTIDGITGSVASNA. A glycan (N-linked (GlcNAc...) asparagine) is linked at Asn-246. Disulfide bonds link Cys-335/Cys-340 and Cys-359/Cys-368.

Belongs to the glycosyl hydrolase 28 family.

Its subcellular location is the secreted. It carries out the reaction (1,4-alpha-D-galacturonosyl)n+m + H2O = (1,4-alpha-D-galacturonosyl)n + (1,4-alpha-D-galacturonosyl)m.. Functionally, involved in maceration and soft-rotting of plant tissue. Hydrolyzes the 1,4-alpha glycosidic bonds of de-esterified pectate in the smooth region of the plant cell wall. The chain is Probable endopolygalacturonase I (pgaI) from Aspergillus clavatus (strain ATCC 1007 / CBS 513.65 / DSM 816 / NCTC 3887 / NRRL 1 / QM 1276 / 107).